The sequence spans 119 residues: Large ribosomal subunit protein bL20 (119 aa).

Belongs to the bacterial ribosomal protein bL20 family.

Binds directly to 23S ribosomal RNA and is necessary for the in vitro assembly process of the 50S ribosomal subunit. It is not involved in the protein synthesizing functions of that subunit. The polypeptide is Large ribosomal subunit protein bL20 (Acidovorax sp. (strain JS42)).